The following is a 284-amino-acid chain: Cell division protein FtsQ (284 aa).

Residues 1–31 (MAQLPASMRRKRAAITSIHDKPPTRKQKLAN) are Cytoplasmic-facing. Residues 32 to 52 (AGGWVLLVIAFVVLAVGIYGL) form a helical membrane-spanning segment. Over 53–284 (YKVITDATVA…SIAGGTKAKP (232 aa)) the chain is Periplasmic. The region spanning 59–128 (ATVAKLEVVG…NGIRVRVMPR (70 aa)) is the POTRA domain.

The protein belongs to the FtsQ/DivIB family. FtsQ subfamily. Part of a complex composed of FtsB, FtsL and FtsQ.

The protein localises to the cell inner membrane. Essential cell division protein. May link together the upstream cell division proteins, which are predominantly cytoplasmic, with the downstream cell division proteins, which are predominantly periplasmic. May control correct divisome assembly. The chain is Cell division protein FtsQ from Acinetobacter oleivorans (strain JCM 16667 / KCTC 23045 / DR1).